The following is a 282-amino-acid chain: MSCRVCLEDRSIKPLPCCKKPVCDECLKRYLSSQVQLGQAEIQCPITECNKHLDESTILYSLPHDDIIKYKYFLELSRMDSSTKPCPQCKHFTTFKRKTHIPNPTKSENKLKIQCPSCQFIWCFRCHAPWHEGVNCREYKKGDKLLRHWANEIEHGQRNAQKCPRCKVHIQRTEGCDHMTCSQCNTNFCYRCGERYRQLRFFGDHTSNLSIFGCKYRYLPERPHVRRLVRGSVCAGKLLIAPLLIVLGLVLGALAVVIGLFGLPIYCLCKKQRKRTRTGMPW.

Residues 1–218 (MSCRVCLEDR…LSIFGCKYRY (218 aa)) form a TRIAD supradomain region. The Zn(2+) site is built by cysteine 3, cysteine 6, cysteine 23, cysteine 26, cysteine 123, cysteine 126, histidine 131, cysteine 136, cysteine 163, and cysteine 166. Residues 3 to 49 (CRVCLEDRSIKPLPCCKKPVCDECLKRYLSSQVQLGQAEIQCPITEC) form an RING-type 1 zinc finger. The segment at 68 to 136 (IKYKYFLELS…HAPWHEGVNC (69 aa)) adopts an IBR-type zinc-finger fold. Residues 163–192 (CPRCKVHIQRTEGCDHMTCSQCNTNFCYRC) form an RING-type 2; atypical zinc finger. The active site involves cysteine 176. The Zn(2+) site is built by cysteine 181, cysteine 184, cysteine 189, cysteine 192, histidine 205, and cysteine 214. The chain crosses the membrane as a helical span at residues 243 to 263 (LLIVLGLVLGALAVVIGLFGL).

It belongs to the RBR family. RNF217 subfamily.

It is found in the cytoplasm. It localises to the membrane. The enzyme catalyses [E2 ubiquitin-conjugating enzyme]-S-ubiquitinyl-L-cysteine + [acceptor protein]-L-lysine = [E2 ubiquitin-conjugating enzyme]-L-cysteine + [acceptor protein]-N(6)-ubiquitinyl-L-lysine.. Its pathway is protein modification; protein ubiquitination. Functionally, E3 ubiquitin-protein ligase which accepts ubiquitin from E2 ubiquitin-conjugating enzymes in the form of a thioester and then directly transfers the ubiquitin to targeted substrates. Mediates the degradation of the iron exporter ferroportin/SLC40A1 and thus regulates iron homeostasis. This Xenopus laevis (African clawed frog) protein is E3 ubiquitin-protein ligase RNF217 (rnf217).